A 150-amino-acid chain; its full sequence is Transcription antitermination protein NusB (150 aa).

Belongs to the NusB family.

In terms of biological role, involved in transcription antitermination. Required for transcription of ribosomal RNA (rRNA) genes. Binds specifically to the boxA antiterminator sequence of the ribosomal RNA (rrn) operons. The sequence is that of Transcription antitermination protein NusB from Chloroflexus aggregans (strain MD-66 / DSM 9485).